A 157-amino-acid polypeptide reads, in one-letter code: Ribosomal RNA large subunit methyltransferase H (157 aa).

S-adenosyl-L-methionine is bound by residues leucine 73, glycine 105, and 124-129 (LSLMTF).

Belongs to the RNA methyltransferase RlmH family. As to quaternary structure, homodimer.

The protein resides in the cytoplasm. It catalyses the reaction pseudouridine(1915) in 23S rRNA + S-adenosyl-L-methionine = N(3)-methylpseudouridine(1915) in 23S rRNA + S-adenosyl-L-homocysteine + H(+). Its function is as follows. Specifically methylates the pseudouridine at position 1915 (m3Psi1915) in 23S rRNA. In Flavobacterium johnsoniae (strain ATCC 17061 / DSM 2064 / JCM 8514 / BCRC 14874 / CCUG 350202 / NBRC 14942 / NCIMB 11054 / UW101) (Cytophaga johnsonae), this protein is Ribosomal RNA large subunit methyltransferase H.